The primary structure comprises 421 residues: AP-3 complex subunit mu (421 aa).

Positions 178-420 (QNKIFFDIIE…TTKAGKFQVR (243 aa)) constitute an MHD domain.

It belongs to the adaptor complexes medium subunit family. As to quaternary structure, adaptor protein complex 3 (AP-3) is a heterotetramer composed of two large adaptins (delta-type subunit and beta-type subunit), a medium adaptin (mu-type subunit) and a small adaptin (sigma-type subunit).

Its subcellular location is the endosome membrane. Functionally, part of the AP-3 complex, an adaptor-related complex which is essential for the compartmentalization of the endocytic pathway. The sequence is that of AP-3 complex subunit mu (apm3) from Dictyostelium discoideum (Social amoeba).